A 343-amino-acid chain; its full sequence is Heat-inducible transcription repressor HrcA (343 aa).

The protein belongs to the HrcA family.

Negative regulator of class I heat shock genes (grpE-dnaK-dnaJ and groELS operons). Prevents heat-shock induction of these operons. The chain is Heat-inducible transcription repressor HrcA from Mycobacterium marinum (strain ATCC BAA-535 / M).